Consider the following 499-residue polypeptide: 6-hydroxynicotinate reductase (499 aa).

4Fe-4S ferredoxin-type domains follow at residues Met-1–Lys-29 and Lys-31–Pro-61. [4Fe-4S] cluster-binding residues include Cys-9, Cys-12, Cys-15, Cys-19, Cys-41, Cys-44, Cys-47, and Cys-51.

As to quaternary structure, homotetramer. An oxidized flavin serves as cofactor. The cofactor is [2Fe-2S] cluster. [4Fe-4S] cluster is required as a cofactor.

The catalysed reaction is 1,4,5,6-tetrahydro-6-oxonicotinate + oxidized 2[4Fe-4S]-[ferredoxin] = 6-hydroxynicotinate + reduced 2[4Fe-4S]-[ferredoxin] + 2 H(+). The protein operates within cofactor degradation; nicotinate degradation; propanoate and pyruvate from 6-hydroxynicotinate: step 1/8. Functionally, catalyzes the reversible reduction of 6-hydroxynicotinate to 6-oxo-1,4,5,6-tetrahydronicotinate. The sequence is that of 6-hydroxynicotinate reductase from Eubacterium barkeri (Clostridium barkeri).